Here is a 783-residue protein sequence, read N- to C-terminus: Protein SCARECROW (783 aa).

A disordered region spans residues glutamine 298–alanine 387. Composition is skewed to low complexity over residues proline 342–serine 353 and glutamate 372–glutamate 384. A coiled-coil region spans residues alanine 387–leucine 418. In terms of domain architecture, GRAS spans glutamine 408–arginine 777. The segment at leucine 415 to alanine 478 is leucine repeat I (LRI). The LxCxE motif signature appears at leucine 422–glutamate 426. A VHIID region spans residues phenylalanine 497 to glycine 562. The short motif at valine 528–aspartate 532 is the VHIID element. The leucine repeat II (LRII) stretch occupies residues alanine 572–arginine 604. The interval valine 613–asparagine 700 is PFYRE. Positions alanine 703 to arginine 777 are SAW.

This sequence belongs to the GRAS family.

The protein localises to the nucleus. Putative transcription factor involved in asymmetric cell division. Required for differentiation of endodermis and graviresponses. This Ipomoea nil (Japanese morning glory) protein is Protein SCARECROW (SCR).